Here is a 90-residue protein sequence, read N- to C-terminus: uncharacterized protein (90 aa).

A disordered region spans residues 62–90; the sequence is RQLKKKQAYKPDPEASFSWSANTSTRGRR. A compositionally biased stretch (polar residues) spans 78–90; that stretch reads FSWSANTSTRGRR.

This is an uncharacterized protein from Escherichia coli (strain K12).